Here is a 313-residue protein sequence, read N- to C-terminus: Dimethyladenosine transferase (313 aa).

The disordered stretch occupies residues 1–21 (MPKVKSGAIGRRRGRQEQRRE). 6 residues coordinate S-adenosyl-L-methionine: His37, Leu39, Gly64, Glu85, Asp113, and Asn128.

It belongs to the class I-like SAM-binding methyltransferase superfamily. rRNA adenine N(6)-methyltransferase family. As to quaternary structure, part of the small subunit (SSU) processome, composed of more than 70 proteins and the RNA chaperone small nucleolar RNA (snoRNA) U3.

It localises to the nucleus. Its subcellular location is the nucleoplasm. It is found in the nucleolus. It carries out the reaction adenosine(1779)/adenosine(1780) in 18S rRNA + 4 S-adenosyl-L-methionine = N(6)-dimethyladenosine(1779)/N(6)-dimethyladenosine(1780) in 18S rRNA + 4 S-adenosyl-L-homocysteine + 4 H(+). Its function is as follows. Specifically dimethylates two adjacent adenosines in the loop of a conserved hairpin near the 3'-end of 18S rRNA in the 40S particle. Involved in the pre-rRNA processing steps leading to small-subunit rRNA production independently of its RNA-modifying catalytic activity. Part of the small subunit (SSU) processome, first precursor of the small eukaryotic ribosomal subunit. During the assembly of the SSU processome in the nucleolus, many ribosome biogenesis factors, an RNA chaperone and ribosomal proteins associate with the nascent pre-rRNA and work in concert to generate RNA folding, modifications, rearrangements and cleavage as well as targeted degradation of pre-ribosomal RNA by the RNA exosome. This Macaca fascicularis (Crab-eating macaque) protein is Dimethyladenosine transferase (DIMT1).